Reading from the N-terminus, the 82-residue chain is Polyketide biosynthesis acyl-carrier-protein AcpK (82 aa).

A Carrier domain is found at glutamine 4–valine 79. O-(pantetheine 4'-phosphoryl)serine is present on serine 39.

In terms of processing, 4'-phosphopantetheine is transferred from CoA to a specific serine of apo-ACP by sfp.

It localises to the cytoplasm. Its pathway is antibiotic biosynthesis; bacillaene biosynthesis. Functionally, involved in some intermediate steps for the synthesis of the antibiotic polyketide bacillaene which is involved in secondary metabolism. This chain is Polyketide biosynthesis acyl-carrier-protein AcpK (acpK), found in Bacillus subtilis (strain 168).